Reading from the N-terminus, the 331-residue chain is Protein RecA (331 aa).

66 to 73 (GPESSGKT) contributes to the ATP binding site.

It belongs to the RecA family.

It localises to the cytoplasm. Functionally, can catalyze the hydrolysis of ATP in the presence of single-stranded DNA, the ATP-dependent uptake of single-stranded DNA by duplex DNA, and the ATP-dependent hybridization of homologous single-stranded DNAs. It interacts with LexA causing its activation and leading to its autocatalytic cleavage. This is Protein RecA from Acholeplasma laidlawii.